A 58-amino-acid polypeptide reads, in one-letter code: U-scoloptoxin(14)-Sa1a (58 aa).

Positions 1–18 (MNRILGMIFLFCLISCYA) are cleaved as a signal peptide.

It belongs to the scoloptoxin-14 family. In terms of processing, contains 4 disulfide bonds. As to expression, expressed by the venom gland.

Its subcellular location is the secreted. This Scolopendra alternans (Florida Keys giant centipede) protein is U-scoloptoxin(14)-Sa1a.